Reading from the N-terminus, the 129-residue chain is uncharacterized protein (129 aa).

3 consecutive transmembrane segments (helical) span residues L49–V69, F72–F92, and Y101–Q118.

The protein localises to the membrane. This is an uncharacterized protein from Saccharomyces cerevisiae (strain ATCC 204508 / S288c) (Baker's yeast).